Consider the following 177-residue polypeptide: Crossover junction endodeoxyribonuclease RuvC (177 aa).

Residues D7, E68, and D141 contribute to the active site. 3 residues coordinate Mg(2+): D7, E68, and D141.

This sequence belongs to the RuvC family. As to quaternary structure, homodimer which binds Holliday junction (HJ) DNA. The HJ becomes 2-fold symmetrical on binding to RuvC with unstacked arms; it has a different conformation from HJ DNA in complex with RuvA. In the full resolvosome a probable DNA-RuvA(4)-RuvB(12)-RuvC(2) complex forms which resolves the HJ. Requires Mg(2+) as cofactor.

The protein resides in the cytoplasm. It carries out the reaction Endonucleolytic cleavage at a junction such as a reciprocal single-stranded crossover between two homologous DNA duplexes (Holliday junction).. In terms of biological role, the RuvA-RuvB-RuvC complex processes Holliday junction (HJ) DNA during genetic recombination and DNA repair. Endonuclease that resolves HJ intermediates. Cleaves cruciform DNA by making single-stranded nicks across the HJ at symmetrical positions within the homologous arms, yielding a 5'-phosphate and a 3'-hydroxyl group; requires a central core of homology in the junction. The consensus cleavage sequence is 5'-(A/T)TT(C/G)-3'. Cleavage occurs on the 3'-side of the TT dinucleotide at the point of strand exchange. HJ branch migration catalyzed by RuvA-RuvB allows RuvC to scan DNA until it finds its consensus sequence, where it cleaves and resolves the cruciform DNA. In Nocardioides sp. (strain ATCC BAA-499 / JS614), this protein is Crossover junction endodeoxyribonuclease RuvC.